The sequence spans 372 residues: DNA replication and repair protein RecF (372 aa).

Position 30-37 (30-37 (GENGQGKT)) interacts with ATP.

It belongs to the RecF family.

It localises to the cytoplasm. Its function is as follows. The RecF protein is involved in DNA metabolism; it is required for DNA replication and normal SOS inducibility. RecF binds preferentially to single-stranded, linear DNA. It also seems to bind ATP. The polypeptide is DNA replication and repair protein RecF (Anaeromyxobacter sp. (strain K)).